The sequence spans 230 residues: Sodium channel modifier 1 (230 aa).

Position 2 is a phosphoserine (Ser2). The short motif at 4–20 is the Bipartite nuclear localization signal element; sequence KREGDDWSQLNVLKKRR. The segment at 42–74 adopts a Matrin-type zinc-finger fold; that stretch reads FACAICPHRPVLDTLAMLTAHRAGKKHLSSLQL. Residue Lys67 forms a Glycyl lysine isopeptide (Lys-Gly) (interchain with G-Cter in SUMO2) linkage. 2 disordered regions span residues 76–106 and 129–191; these read YGKK…EAPL and RRKY…RALD. Residues 89-100 show a composition bias toward basic and acidic residues; sequence PRQHNELRREET. The segment covering 142–151 has biased composition (pro residues); that stretch reads SRPPLPPPEV. The span at 167–180 shows a compositional bias: polar residues; sequence GSQTKESATVSSPA. Residues Ser183 and Ser219 each carry the phosphoserine modification. Positions 188–230 are required for interaction with LUC7L2; it reads RALDHYLTLRSSGWIPDGRGRWIKDENVEFDSDEEEPPDLPLD.

Component of the minor spliceosome. Within this complex, interacts with RNF113A, as well as with SF3B1/SF3b155, SF3B2/SF3b145, SF3B3/SF3b130 and CDC5L. May interact with LUC7L2 and SNRNP70.

The protein localises to the nucleus. It is found in the nucleoplasm. It localises to the nucleus speckle. As a component of the minor spliceosome, involved in the splicing of U12-type introns in pre-mRNAs. Plays a role in the regulation of primary cilia length and Hedgehog signaling. The polypeptide is Sodium channel modifier 1 (SCNM1) (Bos taurus (Bovine)).